We begin with the raw amino-acid sequence, 241 residues long: Proteasome subunit beta type-6 (241 aa).

A propeptide spanning residues 1 to 19 (MATIASEYSSEASNTPIEH) is cleaved from the precursor.

This sequence belongs to the peptidase T1B family. In terms of assembly, the 26S proteasome consists of a 20S proteasome core and two 19S regulatory subunits. The 20S proteasome core is composed of 28 subunits that are arranged in four stacked rings, resulting in a barrel-shaped structure. The two end rings are each formed by seven alpha subunits, and the two central rings are each formed by seven beta subunits. The catalytic chamber with the active sites is on the inside of the barrel.

It localises to the cytoplasm. It is found in the nucleus. Non-catalytic component of the proteasome which degrades poly-ubiquitinated proteins in the cytoplasm and in the nucleus. It is essential for the regulated turnover of proteins and for the removal of misfolded proteins. The proteasome is a multicatalytic proteinase complex that is characterized by its ability to cleave peptides with Arg, Phe, Tyr, Leu, and Glu adjacent to the leaving group at neutral or slightly basic pH. It has an ATP-dependent proteolytic activity. This Saccharomyces cerevisiae (strain ATCC 204508 / S288c) (Baker's yeast) protein is Proteasome subunit beta type-6 (PRE7).